Here is an 83-residue protein sequence, read N- to C-terminus: Alpha-toxin CvIV4 (83 aa).

The first 19 residues, Met-1–Cys-19, serve as a signal peptide directing secretion. The LCN-type CS-alpha/beta domain occupies Lys-21–Asn-79. Cystine bridges form between Cys-31/Cys-78, Cys-35/Cys-55, Cys-41/Cys-61, and Cys-45/Cys-63.

Belongs to the long (4 C-C) scorpion toxin superfamily. Sodium channel inhibitor family. As to expression, expressed by the venom gland.

It localises to the secreted. In terms of biological role, this toxin significantly slows the fast inactivation of Nav1.2/SCN2A (EC(50)=580 nM), Nav1.3/SCN3A (EC(50)=1310 nM), Nav1.4/SCN4A (EC(50)=530 nM), and Nav1.7/SCN9A (EC(50)=1340 nM). The toxin does not affect the peak amplitude of Nav1.7 currents. On all channels cited above, the toxin requires depolarizing potentials to slow channel inactivation. In addition, the toxin has no or very weak effects on the voltage-dependence of steady-state inactivation, and on voltage-dependence of activation. In vivo, it produces paw licking in mice equivalent to the effects of whole venom. In Centruroides vittatus (Striped bark scorpion), this protein is Alpha-toxin CvIV4.